The primary structure comprises 606 residues: Scavenger receptor class A member 3 (606 aa).

The Cytoplasmic segment spans residues 1-56; that stretch reads MKVRSAGGDGDALCVTEEDLAGDDEDMPTFPCTQKGRPGPRCSRCQKNLSLHTSVR. The chain crosses the membrane as a helical; Signal-anchor for type II membrane protein span at residues 57–77; it reads ILYLFLALLLVAVAVLASLVF. Residues 78-606 lie on the Extracellular side of the membrane; the sequence is RKVDSLSEDI…PGPPGSQSFY (529 aa). Residues Asn115, Asn182, Asn224, Asn257, Asn313, Asn337, Asn365, Asn400, Asn430, and Asn451 are each glycosylated (N-linked (GlcNAc...) asparagine). The segment at 454–606 is disordered; it reads ILRGAPGPPG…PGPPGSQSFY (153 aa). The 59-residue stretch at 455–513 folds into the Collagen-like 1 domain; sequence LRGAPGPPGPRGFKGDMGVKGPVGGRGPKGDPGSLGPLGPQGPQGQPGEAGPVGERGPV. Residues 485-519 are compositionally biased toward low complexity; the sequence is DPGSLGPLGPQGPQGQPGEAGPVGERGPVGPRGFP. The segment covering 526-535 has biased composition (gly residues); the sequence is GSFGTGGPRG. The region spanning 544 to 603 is the Collagen-like 2 domain; sequence GPPGPEGPPGSPGPSGPQGKPGIAGKTGSPGQRGAMGPKGEPGIQGPPGLPGPPGPPGSQ. Composition is skewed to pro residues over residues 545–558 and 591–600; these read PPGPEGPPGSPGPS and PGLPGPPGPP.

Expressed ubiquitously.

The protein localises to the endoplasmic reticulum membrane. Its subcellular location is the golgi apparatus membrane. In terms of biological role, seems to protect cells by scavenging oxidative molecules or harmful products of oxidation. In Homo sapiens (Human), this protein is Scavenger receptor class A member 3 (SCARA3).